The following is a 190-amino-acid chain: Putative manganese efflux pump MntP (190 aa).

Transmembrane regions (helical) follow at residues 37–57 (LILA…GWGI), 64–84 (LSFI…GVGA), 111–131 (LILG…MAFV), 135–155 (IITL…VGAW), and 164–184 (FGGW…GNIL).

This sequence belongs to the MntP (TC 9.B.29) family.

It is found in the cell membrane. In terms of biological role, probably functions as a manganese efflux pump. This is Putative manganese efflux pump MntP from Corynebacterium efficiens (strain DSM 44549 / YS-314 / AJ 12310 / JCM 11189 / NBRC 100395).